Here is an 864-residue protein sequence, read N- to C-terminus: Leucine--tRNA ligase (864 aa).

The short motif at 40–51 (PYPSGAGLHVGH) is the 'HIGH' region element. The short motif at 636-640 (KMSKS) is the 'KMSKS' region element. Residue Lys-639 coordinates ATP.

It belongs to the class-I aminoacyl-tRNA synthetase family.

The protein resides in the cytoplasm. It catalyses the reaction tRNA(Leu) + L-leucine + ATP = L-leucyl-tRNA(Leu) + AMP + diphosphate. The protein is Leucine--tRNA ligase of Leptospira borgpetersenii serovar Hardjo-bovis (strain JB197).